Consider the following 503-residue polypeptide: von Willebrand factor A domain-containing protein 1 (503 aa).

An N-terminal signal peptide occupies residues 1–21; sequence MEVRKALTCVFLTVFLCSGDA. The 178-residue stretch at 36-213 folds into the VWFA domain; that stretch reads DVLFLLDSSG…IIGEDLRNSI (178 aa). Fibronectin type-III domains are found at residues 218-324 and 331-423; these read RAER…TVNP and LLSS…VLPA.

As to quaternary structure, homodimer or homomultimer; disulfide-linked.

It is found in the secreted. It localises to the extracellular space. The protein resides in the extracellular matrix. The protein localises to the basement membrane. Promotes matrix assembly. Involved in the organization of skeletal muscles and in the formation of neuromuscular junctions. The chain is von Willebrand factor A domain-containing protein 1 from Danio rerio (Zebrafish).